The chain runs to 407 residues: Argininosuccinate synthase (407 aa).

ATP-binding positions include 16–24 and alanine 44; that span reads AYSGGLDTS. L-citrulline contacts are provided by tyrosine 96 and serine 101. Glycine 126 serves as a coordination point for ATP. Residues threonine 128, asparagine 132, and aspartate 133 each coordinate L-aspartate. Residue asparagine 132 participates in L-citrulline binding. Residues arginine 136, serine 185, serine 194, glutamate 270, and tyrosine 282 each contribute to the L-citrulline site.

It belongs to the argininosuccinate synthase family. Type 1 subfamily. Homotetramer.

The protein localises to the cytoplasm. The enzyme catalyses L-citrulline + L-aspartate + ATP = 2-(N(omega)-L-arginino)succinate + AMP + diphosphate + H(+). Its pathway is amino-acid biosynthesis; L-arginine biosynthesis; L-arginine from L-ornithine and carbamoyl phosphate: step 2/3. In Shewanella sp. (strain ANA-3), this protein is Argininosuccinate synthase.